The chain runs to 373 residues: WAT1-related protein At4g08300 (373 aa).

The next 10 helical transmembrane spans lie at 11-31, 41-61, 67-87, 102-122, 139-159, 185-205, 219-239, 255-275, 281-301, and 306-326; these read PIIA…ITMV, ILAT…ALIL, PKMT…EPLL, TYSS…AVIF, IGTA…GPAI, WVTG…FFIL, LVMW…LIMV, AAVY…SIVI, VFTT…GVLV, and IHLG…SVVW. EamA domains are found at residues 23–151 and 198–325; these read AGMY…AMVM and TWAG…YSVV.

The protein belongs to the drug/metabolite transporter (DMT) superfamily. Plant drug/metabolite exporter (P-DME) (TC 2.A.7.4) family.

The protein resides in the membrane. The polypeptide is WAT1-related protein At4g08300 (Arabidopsis thaliana (Mouse-ear cress)).